The chain runs to 70 residues: Sec-independent protein translocase protein TatA (70 aa).

Residues Met1 to Gly21 form a helical membrane-spanning segment. A disordered region spans residues Asp46–Ser70.

This sequence belongs to the TatA/E family. As to quaternary structure, the Tat system comprises two distinct complexes: a TatABC complex, containing multiple copies of TatA, TatB and TatC subunits, and a separate TatA complex, containing only TatA subunits. Substrates initially bind to the TatABC complex, which probably triggers association of the separate TatA complex to form the active translocon.

Its subcellular location is the cell inner membrane. In terms of biological role, part of the twin-arginine translocation (Tat) system that transports large folded proteins containing a characteristic twin-arginine motif in their signal peptide across membranes. TatA could form the protein-conducting channel of the Tat system. This chain is Sec-independent protein translocase protein TatA, found in Thiobacillus denitrificans (strain ATCC 25259 / T1).